The primary structure comprises 112 residues: MYRPTTTSYSPVYTGNPLYDISASQSDPRQRIRKNVRFQTEVDEFPDFDDSDSDELQFENRDPRKRIDPIKHMLLVQRLKRVSTSSRRLFIFTLSMFLIAFILLIAFVSFRD.

Residues Ser51 and Ser53 each carry the phosphoserine modification. A helical transmembrane segment spans residues 90–110 (FIFTLSMFLIAFILLIAFVSF).

Its subcellular location is the golgi apparatus membrane. It is found in the endoplasmic reticulum membrane. This is an uncharacterized protein from Schizosaccharomyces pombe (strain 972 / ATCC 24843) (Fission yeast).